An 89-amino-acid polypeptide reads, in one-letter code: Putative membrane protein insertion efficiency factor (89 aa).

This sequence belongs to the UPF0161 family.

It is found in the cell inner membrane. Its function is as follows. Could be involved in insertion of integral membrane proteins into the membrane. This chain is Putative membrane protein insertion efficiency factor, found in Petrotoga mobilis (strain DSM 10674 / SJ95).